A 63-amino-acid chain; its full sequence is Large ribosomal subunit protein bL28 (63 aa).

The tract at residues M1–N22 is disordered.

It belongs to the bacterial ribosomal protein bL28 family.

The sequence is that of Large ribosomal subunit protein bL28 from Campylobacter hominis (strain ATCC BAA-381 / DSM 21671 / CCUG 45161 / LMG 19568 / NCTC 13146 / CH001A).